A 444-amino-acid polypeptide reads, in one-letter code: E1B 55 kDa protein (444 aa).

The segment at 1–35 (MEQNADMEPDRQVNQRPPRFRARGAGVRGRGRVRR) is disordered. A phosphoserine mark is found at Ser-438 and Ser-439.

This sequence belongs to the adenoviridae E1B 55 kDa protein family. In terms of assembly, interacts with host PML-4 and PML-5; this interaction promotes efficient subnuclear targeting of E1B-55K to PML nuclear bodies. Interacts with E4-ORF3 protein. Interacts with E4-ORF6 protein.

It is found in the host nucleus. Its subcellular location is the host cytoplasm. Plays a major role to prevent cellular inhibition of viral genome replication. Assembles an SCF-like E3 ubiquitin ligase complex based on the cellular proteins ELOB, ELOC, CUL5 and RBX1, in cooperation with viral E4orf6. This viral RING-type ligase ubiquitinates cellular substrates and targets them to proteasomal degradation: TP53/p53, LIG4, MRE11-RAD50-NBS1 (MRN) complex, ITGA3, DAXX and BLM. E1B-55K probably acts as the substrate-specific adapter of the SCF-like E3 ubiquitin ligase complex. Degradation of host TP53/p53 activity is essential for preventing E1A-induced TP53 accumulation that would otherwise lead to cell apoptosis and growth arrest. E1B-55K also inactivates TP53 transcription-factor activity by binding its transactivation domain. E1B-55K also functions as a SUMO1 E3 ligase for TP53 which causes the latter to be sequestered in promyelocytic leukemia (PML) nuclear bodies thereby contributing to maximal inhibition of TP53 function. This chain is E1B 55 kDa protein, found in Canis lupus familiaris (Dog).